A 285-amino-acid chain; its full sequence is Protease HtpX homolog (285 aa).

A run of 2 helical transmembrane segments spans residues 7-27 and 30-50; these read TAMLMAAITALFIVIGGMIGG and GMTIALLIALGMNFFSYWFSD. Histidine 131 contacts Zn(2+). Glutamate 132 is an active-site residue. Zn(2+) is bound at residue histidine 135. Transmembrane regions (helical) follow at residues 146 to 166 and 177 to 197; these read ISATMAGAISALANFAMFFGG and IAGIAVALLAPIAGALIQMAI. Glutamate 202 lines the Zn(2+) pocket.

Belongs to the peptidase M48B family. Zn(2+) serves as cofactor.

It localises to the cell inner membrane. This Burkholderia mallei (strain NCTC 10247) protein is Protease HtpX homolog.